The following is a 278-amino-acid chain: Probable velvet family sexual development regulator SCHCODRAFT_28806 (278 aa).

The region spanning 51 to 255 (GRTIRASLDE…ARVGVRLSVR (205 aa)) is the Velvet domain. The tract at residues 257-278 (TGKKATTKRRKRSDSFDEDDSS) is disordered.

The protein belongs to the velvet family.

The protein localises to the nucleus. Velvet-domain-containing protein that probably acts as a positive regulator of sexual development. The chain is Probable velvet family sexual development regulator SCHCODRAFT_28806 from Schizophyllum commune (strain H4-8 / FGSC 9210) (Split gill fungus).